Here is a 653-residue protein sequence, read N- to C-terminus: Testicular spindle-associated protein SHCBP1L (653 aa).

The tract at residues 1-65 (MASGSKASVP…PVKGKAGRET (65 aa)) is disordered. Residue serine 8 is modified to Phosphoserine. Polar residues predominate over residues 28-41 (SAVSGDTAAATTLK). The span at 46–56 (PVRSVVASPRP) shows a compositional bias: low complexity. Position 53 is a phosphoserine (serine 53). A coiled-coil region spans residues 299 to 326 (IAQRFKKTLEKYKNKRVELIEYQSNIKE). 4 PbH1 repeats span residues 493-514 (SGHM…CVLT), 515-537 (GAAL…ELYP), 538-571 (GSIA…NMKV), and 574-596 (APKL…SILQ). An N6-acetyllysine modification is found at lysine 570. Position 645 is an N6-acetyllysine (lysine 645).

Interacts with HSPA2; this interaction may promote the recruitment of HSPA2 to the spindle. In terms of tissue distribution, expressed in spermatocytes and elongating spermatids inside the seminiferous tubules (at protein level). Testis-specific.

The protein localises to the cytoplasm. The protein resides in the cytoskeleton. It localises to the spindle. Testis-specific spindle-associated factor that plays a role in spermatogenesis. In association with HSPA2, participates in the maintenance of spindle integrity during meiosis in male germ cells. In Homo sapiens (Human), this protein is Testicular spindle-associated protein SHCBP1L.